A 735-amino-acid polypeptide reads, in one-letter code: Translation initiation factor IF-2 (735 aa).

Basic and acidic residues-rich tracts occupy residues 52–66 (VNSE…EKPK) and 101–117 (KGKE…EKKL). The interval 52-154 (VNSEKKAEKK…PAKKEKELPK (103 aa)) is disordered. A compositionally biased stretch (basic residues) spans 121-133 (AKKKGKGPMKGKK). A compositionally biased stretch (low complexity) spans 134 to 145 (QAAPASKQAQQP). One can recognise a tr-type G domain in the interval 236-405 (ERPPVVTIMG…LLVSEMEELK (170 aa)). The tract at residues 245 to 252 (GHVDHGKT) is G1. 245–252 (GHVDHGKT) contacts GTP. Residues 270–274 (GITQH) are G2. The segment at 291–294 (DTPG) is G3. Residues 291-295 (DTPGH) and 345-348 (NKMD) contribute to the GTP site. A G4 region spans residues 345–348 (NKMD). Positions 381-383 (SAK) are G5.

This sequence belongs to the TRAFAC class translation factor GTPase superfamily. Classic translation factor GTPase family. IF-2 subfamily.

It localises to the cytoplasm. Its function is as follows. One of the essential components for the initiation of protein synthesis. Protects formylmethionyl-tRNA from spontaneous hydrolysis and promotes its binding to the 30S ribosomal subunits. Also involved in the hydrolysis of GTP during the formation of the 70S ribosomal complex. The sequence is that of Translation initiation factor IF-2 from Geobacillus thermodenitrificans (strain NG80-2).